A 166-amino-acid polypeptide reads, in one-letter code: Interferon gamma (166 aa).

The N-terminal stretch at 1-23 (MKYTSYFLALLLCVLLGFSGSYG) is a signal peptide. The residue at position 24 (Gln24) is a Pyrrolidone carboxylic acid. 2 N-linked (GlcNAc...) asparagine glycosylation sites follow: Asn39 and Asn106.

This sequence belongs to the type II (or gamma) interferon family. As to quaternary structure, homodimer. Interacts with IFNGR1 (via extracellular domain); this interaction promotes IFNGR1 dimerization. Released primarily from activated T lymphocytes.

Its subcellular location is the secreted. In terms of biological role, type II interferon produced by immune cells such as T-cells and NK cells that plays crucial roles in antimicrobial, antiviral, and antitumor responses by activating effector immune cells and enhancing antigen presentation. Primarily signals through the JAK-STAT pathway after interaction with its receptor IFNGR1 to affect gene regulation. Upon IFNG binding, IFNGR1 intracellular domain opens out to allow association of downstream signaling components JAK2, JAK1 and STAT1, leading to STAT1 activation, nuclear translocation and transcription of IFNG-regulated genes. Many of the induced genes are transcription factors such as IRF1 that are able to further drive regulation of a next wave of transcription. Plays a role in class I antigen presentation pathway by inducing a replacement of catalytic proteasome subunits with immunoproteasome subunits. In turn, increases the quantity, quality, and repertoire of peptides for class I MHC loading. Increases the efficiency of peptide generation also by inducing the expression of activator PA28 that associates with the proteasome and alters its proteolytic cleavage preference. Up-regulates as well MHC II complexes on the cell surface by promoting expression of several key molecules such as cathepsins B/CTSB, H/CTSH, and L/CTSL. Participates in the regulation of hematopoietic stem cells during development and under homeostatic conditions by affecting their development, quiescence, and differentiation. The chain is Interferon gamma (IFNG) from Bubalus carabanensis (Swamp type water buffalo).